The chain runs to 1158 residues: ATP-dependent helicase/deoxyribonuclease subunit B (1158 aa).

This sequence belongs to the helicase family. AddB/RexB type 2 subfamily. As to quaternary structure, heterodimer of AddA and RexB. It depends on Mg(2+) as a cofactor.

Its function is as follows. The heterodimer acts as both an ATP-dependent DNA helicase and an ATP-dependent, dual-direction single-stranded exonuclease. Recognizes the chi site generating a DNA molecule suitable for the initiation of homologous recombination. This subunit has 5' -&gt; 3' nuclease activity but not helicase activity. The polypeptide is ATP-dependent helicase/deoxyribonuclease subunit B (Lactobacillus gasseri (strain ATCC 33323 / DSM 20243 / BCRC 14619 / CIP 102991 / JCM 1131 / KCTC 3163 / NCIMB 11718 / NCTC 13722 / AM63)).